The sequence spans 342 residues: Serine/threonine-protein kinase SAPK1 (342 aa).

The Protein kinase domain occupies 4 to 260 (YEVMRDIGSG…IPEIKNHPWF (257 aa)). ATP-binding positions include 10–18 (IGSGNFGVA) and Lys-33. Asp-123 (proton acceptor) is an active-site residue. Residues 253–342 (EIKNHPWFLK…ENSGDFVCAL (90 aa)) form a C-terminal region.

It belongs to the protein kinase superfamily. Ser/Thr protein kinase family. In terms of processing, phosphorylated. As to expression, expressed in leaf blades, leaf sheaths and roots. Expressed in shoots and roots of young seedlings.

The catalysed reaction is L-seryl-[protein] + ATP = O-phospho-L-seryl-[protein] + ADP + H(+). It carries out the reaction L-threonyl-[protein] + ATP = O-phospho-L-threonyl-[protein] + ADP + H(+). With respect to regulation, activated by phosphorylation in response to hyperosmotic stress within 5 minutes. Functionally, may play a role in signal transduction of hyperosmotic response. The sequence is that of Serine/threonine-protein kinase SAPK1 (SAPK1) from Oryza sativa subsp. japonica (Rice).